A 339-amino-acid chain; its full sequence is Anthranilate phosphoribosyltransferase (339 aa).

Residues Gly86, 89–90, Thr94, 96–99, 114–122, and Ser126 each bind 5-phospho-alpha-D-ribose 1-diphosphate; these read GD, NIST, and KHGNRGVSS. Gly86 serves as a coordination point for anthranilate. Ser98 is a binding site for Mg(2+). An anthranilate-binding site is contributed by Asn117. Residue Arg172 participates in anthranilate binding. Mg(2+) is bound by residues Asp230 and Glu231.

It belongs to the anthranilate phosphoribosyltransferase family. In terms of assembly, homodimer. Requires Mg(2+) as cofactor.

The catalysed reaction is N-(5-phospho-beta-D-ribosyl)anthranilate + diphosphate = 5-phospho-alpha-D-ribose 1-diphosphate + anthranilate. The protein operates within amino-acid biosynthesis; L-tryptophan biosynthesis; L-tryptophan from chorismate: step 2/5. Functionally, catalyzes the transfer of the phosphoribosyl group of 5-phosphorylribose-1-pyrophosphate (PRPP) to anthranilate to yield N-(5'-phosphoribosyl)-anthranilate (PRA). The chain is Anthranilate phosphoribosyltransferase from Photobacterium profundum (strain SS9).